Consider the following 390-residue polypeptide: Neuromedin-B receptor (390 aa).

A disordered region spans residues 1 to 20 (MPPRSLPNLSLPTEASESEL). Topologically, residues 1–41 (MPPRSLPNLSLPTEASESELEPEVWENDFLPDSDGTTAELV) are extracellular. An N-linked (GlcNAc...) asparagine glycan is attached at Asn8. The chain crosses the membrane as a helical span at residues 42–65 (IRCVIPSLYLIIISVGLLGNIMLV). Over 66-79 (KIFLTNSTMRSVPN) the chain is Cytoplasmic. Residues 80 to 99 (IFISNLAAGDLLLLLTCVPV) form a helical membrane-spanning segment. The Extracellular segment spans residues 100–117 (DASRYFFDEWVFGKLGCK). An intrachain disulfide couples Cys116 to Cys198. Residues 118-139 (LIPAIQLTSVGVSVFTLTALSA) form a helical membrane-spanning segment. Topologically, residues 140 to 156 (DRYRAIVNPMDMQTSGV) are cytoplasmic. A helical transmembrane segment spans residues 157–177 (VLWTSLKAVGIWVVSVLLAVP). Residues 178–211 (EAVFSEVARIGSSDNSSFTACIPYPQTDELHPKI) lie on the Extracellular side of the membrane. An N-linked (GlcNAc...) asparagine glycan is attached at Asn192. Residues 212–235 (HSVLIFLVYFLIPLVIISIYYYHI) traverse the membrane as a helical segment. Residues 236–266 (AKTLIRSAHNLPGEYNEHTKKQMETRKRLAK) lie on the Cytoplasmic side of the membrane. A helical membrane pass occupies residues 267-287 (IVLVFVGCFVFCWFPNHILYL). Topologically, residues 288–299 (YRSFNYKEIDPS) are extracellular. A helical membrane pass occupies residues 300 to 327 (LGHMIVTLVARVLSFSNSCVNPFALYLL). Topologically, residues 328–390 (SESFRKHFNS…GHSTKQEIAL (63 aa)) are cytoplasmic. The S-palmitoyl cysteine moiety is linked to residue Cys341. Phosphoserine is present on Ser352.

It belongs to the G-protein coupled receptor 1 family. As to expression, brain (olfactory bulb and central thalamic regions), and esophagus.

It localises to the cell membrane. Its function is as follows. Receptor for neuromedin-B. Contributes to the maintenance of basal sigh rate through signaling in the pre-Botzinger complex, a cluster of several thousand neurons in the ventrolateral medulla responsible for inspiration during respiratory activity. Contributes to the induction of sneezing following exposure to chemical irritants or allergens which causes release of NMB by nasal sensory neurons and activation of NMBR-expressing neurons in the sneeze-evoking region of the brainstem. These in turn activate neurons of the caudal ventral respiratory group, giving rise to the sneezing response. Contributes to induction of acute itch, possibly through its activation on dorsal root ganglion neurons by the NMB peptide. Plays a role in the innate immune response to influenza A virus infection by enhancing interferon alpha expression and reducing expression of IL6. Plays a role in CSF1-induced proliferation of osteoclast precursors by contributing to the positive regulation of the expression of the CSF1 receptor CSF1R. The polypeptide is Neuromedin-B receptor (Nmbr) (Rattus norvegicus (Rat)).